The primary structure comprises 179 residues: Large ribosomal subunit protein uL5 (179 aa).

The protein belongs to the universal ribosomal protein uL5 family. In terms of assembly, part of the 50S ribosomal subunit; part of the 5S rRNA/L5/L18/L25 subcomplex. Contacts the 5S rRNA and the P site tRNA. Forms a bridge to the 30S subunit in the 70S ribosome.

In terms of biological role, this is one of the proteins that bind and probably mediate the attachment of the 5S RNA into the large ribosomal subunit, where it forms part of the central protuberance. In the 70S ribosome it contacts protein S13 of the 30S subunit (bridge B1b), connecting the 2 subunits; this bridge is implicated in subunit movement. Contacts the P site tRNA; the 5S rRNA and some of its associated proteins might help stabilize positioning of ribosome-bound tRNAs. This chain is Large ribosomal subunit protein uL5, found in Pseudomonas entomophila (strain L48).